The following is a 569-amino-acid chain: Carboxylesterase 3 (569 aa).

The N-terminal stretch at 1-24 (MRLHRLRARLNAVAFGLLLLLVHG) is a signal peptide. An intrachain disulfide couples C95 to C122. An N-linked (GlcNAc...) asparagine glycan is attached at N103. The Acyl-ester intermediate role is filled by S227. An intrachain disulfide couples C279 to C290. Catalysis depends on charge relay system residues E345 and H458. The Prevents secretion from ER motif lies at 566 to 569 (QEDL).

The protein belongs to the type-B carboxylesterase/lipase family. In terms of processing, N-glycosylated.

Its subcellular location is the endoplasmic reticulum lumen. The catalysed reaction is a carboxylic ester + H2O = an alcohol + a carboxylate + H(+). In terms of biological role, involved in the detoxification of xenobiotics and in the activation of ester and amide prodrugs. The polypeptide is Carboxylesterase 3 (CES3) (Pongo abelii (Sumatran orangutan)).